The sequence spans 247 residues: Particulate methane monooxygenase beta subunit (247 aa).

6 helical membrane-spanning segments follow: residues 23–43 (WMAL…HAML), 59–79 (LWVT…QSYL), 86–106 (PWGA…NRYF), 111–131 (WTYF…AIIL), 145–165 (AIVG…PIIA), and 215–235 (VSAF…HFIG).

In terms of assembly, m.capsulatus has two forms of methane monooxygenase, a soluble (sMMO) and a membrane-bound (particulate) type (pMMO). The particulate type is a nonamer composed of three alpha:beta:gamma heterotrimeric protomers assembled into a cylindrical structure; the beta and gamma subunits comprise the bulk of the membrane-spanning regions and the soluble regions are derived primarily from alpha subunits which form two antiparallel beta-barrel-like structures each. This assembly, also called pMMO hydroxylase (pMMO-H), is proposed to associate with methanol dehydrogenase (MDH), also designated as pMMO-R, to form the pMMO-C complex which seems to have greater methane monooxygenase activity.

The protein localises to the membrane. It carries out the reaction methane + a quinol + O2 = methanol + a quinone + H2O. In terms of biological role, non-catalytic subunit of the methane monooxygenase that is responsible for the initial oxygenation of methane to methanol in methanotrophs. At least in vitro, specific quinols can replace NADH as reductants. This is Particulate methane monooxygenase beta subunit (pmoA1) from Methylococcus capsulatus (strain ATCC 33009 / NCIMB 11132 / Bath).